The primary structure comprises 301 residues: Cuticle collagen 1 (301 aa).

An N-terminal signal peptide occupies residues 1–37; the sequence is METDGRLKAYKFVAYAAVGFSIAAVASVLLTLPMVYS. A furin-like endopeptidase recognition region region spans residues 79–82; that stretch reads RTTR. Triple-helical region regions lie at residues 105–134, 153–179, 183–209, and 218–283; these read GPPG…PGKP, GPPG…PGTD, GSPG…PGTP, and GAPG…KGIC. The interval 109–284 is disordered; it reads PAGAPGKPGK…GTPGEKGICP (176 aa). Composition is skewed to pro residues over residues 131 to 164 and 184 to 193; these read PGKP…PGAP and SPGPRGPPGP. The span at 194–210 shows a compositional bias: low complexity; it reads AGEAGAPGPAGEPGTPA. Pro residues predominate over residues 226–258; sequence SGPPGPPGPPGAPGNDGPPGPPGPKGAPGPDGP.

This sequence belongs to the cuticular collagen family. In terms of assembly, collagen polypeptide chains are complexed within the cuticle by disulfide bonds and other types of covalent cross-links.

The protein localises to the secreted. It is found in the extracellular space. Secreted collagen that forms part of the nematode cuticle, which functions as an exoskeleton and a barrier to protect the worm from its environment. Secretion and subsequent incorporation into the cuticle is likely mediated by bli-4, which probably cleaves at the N-terminal consensus furin cleavage site. This is Cuticle collagen 1 (sqt-3) from Caenorhabditis elegans.